We begin with the raw amino-acid sequence, 495 residues long: Omega-crystallin (495 aa).

It belongs to the aldehyde dehydrogenase family. As to expression, lens.

Its function is as follows. Omega-crystallins are structural components of squids and octopi eye lens. Contains relatively little if any DHAL activity. This chain is Omega-crystallin, found in Nototodarus sloanii (Wellington flying squid).